Consider the following 240-residue polypeptide: Aspartate/glutamate leucyltransferase (240 aa).

The protein belongs to the R-transferase family. Bpt subfamily.

It is found in the cytoplasm. The catalysed reaction is N-terminal L-glutamyl-[protein] + L-leucyl-tRNA(Leu) = N-terminal L-leucyl-L-glutamyl-[protein] + tRNA(Leu) + H(+). It catalyses the reaction N-terminal L-aspartyl-[protein] + L-leucyl-tRNA(Leu) = N-terminal L-leucyl-L-aspartyl-[protein] + tRNA(Leu) + H(+). In terms of biological role, functions in the N-end rule pathway of protein degradation where it conjugates Leu from its aminoacyl-tRNA to the N-termini of proteins containing an N-terminal aspartate or glutamate. This is Aspartate/glutamate leucyltransferase from Bordetella avium (strain 197N).